Consider the following 211-residue polypeptide: Allatostatins MIP (211 aa).

Residues 1–24 (MAHTKTRRTYGFLMVLLILGSACG) form the signal peptide. Positions 25 to 63 (NLVASGSAGSPPSNEPGGGGLSEQVVLDQLSESDLYGNN) are excised as a propeptide. W74 is modified (tryptophan amide). The propeptide occupies 78–148 (SSSGDVSDPD…DDLAGEPDVE (71 aa)). Positions 115–135 (ASGQSAQQQQQQPLQQQSQSG) are enriched in low complexity. The interval 115–142 (ASGQSAQQQQQQPLQQQSQSGEDFDDLA) is disordered. W159, W175, W189, and W202 each carry tryptophan amide. Positions 168 to 190 (WNKFRGAWGKREPTWNNLKGMWG) are disordered. Residues 206–211 (SQLPSN) constitute a propeptide that is removed on maturation.

As to expression, in larvae, strongly expressed in the midgut region before and in between the copper cells, and in a group of cells in the posterior part of the larval midgut. Expressed in the neurons of many areas including the subesophageal ganglion/tritocerebrum (SOG), olfactory glomeruli, lateral ventral protocerebrum, mushroom body, the optic lobe medulla and in the antennal lobes.

The protein resides in the secreted. Ligand for the sex peptide receptor (SPR). Stabilizes sleep and maintains sleep homeostasis to inhibit the activity of wake-promoting circuits, such as those that involve the pigment dispersing factor (pdf) neurons. Regulated by the circadian clock network and pathways associated with a sleep homeostat. May also have a regulatory role in gut motility. This is Allatostatins MIP (Mip) from Drosophila melanogaster (Fruit fly).